A 128-amino-acid polypeptide reads, in one-letter code: Large ribosomal subunit protein eL8 (128 aa).

Belongs to the eukaryotic ribosomal protein eL8 family. Part of the 50S ribosomal subunit. Probably part of the RNase P complex.

It is found in the cytoplasm. Functionally, multifunctional RNA-binding protein that recognizes the K-turn motif in ribosomal RNA, the RNA component of RNase P, box H/ACA, box C/D and box C'/D' sRNAs. This Staphylothermus marinus (strain ATCC 43588 / DSM 3639 / JCM 9404 / F1) protein is Large ribosomal subunit protein eL8.